The following is a 104-amino-acid chain: uncharacterized protein (104 aa).

An N-terminal signal peptide occupies residues 1–25 (MVSSFFMASTLLAISSCFNSSISRA). The helical transmembrane segment at 79–99 (IPVVIVVEISSTLVLLLSAFL) threads the bilayer.

It is found in the membrane. This is an uncharacterized protein from Saccharomyces cerevisiae (strain ATCC 204508 / S288c) (Baker's yeast).